A 263-amino-acid polypeptide reads, in one-letter code: Endonuclease 8 (263 aa).

Residue P2 is the Schiff-base intermediate with DNA of the active site. E3 serves as the catalytic Proton donor. The active-site Proton donor; for beta-elimination activity is K53. Positions 70, 125, and 169 each coordinate DNA. The segment at 229-263 (KVFHRDGEACERCGGIIEKTTLSSRPFYWCPHCQK) adopts an FPG-type zinc-finger fold. Catalysis depends on R253, which acts as the Proton donor; for delta-elimination activity.

Belongs to the FPG family. Requires Zn(2+) as cofactor.

It catalyses the reaction 2'-deoxyribonucleotide-(2'-deoxyribose 5'-phosphate)-2'-deoxyribonucleotide-DNA = a 3'-end 2'-deoxyribonucleotide-(2,3-dehydro-2,3-deoxyribose 5'-phosphate)-DNA + a 5'-end 5'-phospho-2'-deoxyribonucleoside-DNA + H(+). Involved in base excision repair of DNA damaged by oxidation or by mutagenic agents. Acts as a DNA glycosylase that recognizes and removes damaged bases. Has a preference for oxidized pyrimidines, such as thymine glycol, 5,6-dihydrouracil and 5,6-dihydrothymine. Has AP (apurinic/apyrimidinic) lyase activity and introduces nicks in the DNA strand. Cleaves the DNA backbone by beta-delta elimination to generate a single-strand break at the site of the removed base with both 3'- and 5'-phosphates. The chain is Endonuclease 8 from Salmonella paratyphi A (strain AKU_12601).